We begin with the raw amino-acid sequence, 305 residues long: ADP,ATP carrier protein (305 aa).

Solcar repeat units follow at residues 8 to 101 (SNFA…IKAM), 112 to 204 (KWFA…LKPL), and 212 to 298 (NSFL…LQVI). 5 consecutive transmembrane segments (helical) span residues 10–37 (FAID…VKLL), 78–102 (TANV…KAMF), 110–130 (YAKW…LSLL), 180–201 (FLPS…YDSL), and 215–235 (LASF…SYPL). Residues Arg-83 and Lys-95 each coordinate ADP. Arg-239 is a binding site for ADP. The segment at 239–244 (RRRMMM) is important for transport activity. Residues 239 to 244 (RRRMMM) carry the Nucleotide carrier signature motif motif. The helical transmembrane segment at 275-295 (CGANILRGVAGAGVISMYDQL) threads the bilayer.

This sequence belongs to the mitochondrial carrier (TC 2.A.29) family. As to quaternary structure, monomer.

The protein resides in the mitochondrion inner membrane. The enzyme catalyses ADP(in) + ATP(out) = ADP(out) + ATP(in). With respect to regulation, the matrix-open state (m-state) is inhibited by the membrane-permeable bongkrekic acid (BKA). The cytoplasmic-open state (c-state) is inhibited by the membrane-impermeable toxic inhibitor carboxyatractyloside (CATR). ADP:ATP antiporter that mediates import of ADP into the mitochondrial matrix for ATP synthesis, and export of ATP out to fuel the cell. Cycles between the cytoplasmic-open state (c-state) and the matrix-open state (m-state): operates by the alternating access mechanism with a single substrate-binding site intermittently exposed to either the cytosolic (c-state) or matrix (m-state) side of the inner mitochondrial membrane. The sequence is that of ADP,ATP carrier protein (AAC) from Kluyveromyces lactis (strain ATCC 8585 / CBS 2359 / DSM 70799 / NBRC 1267 / NRRL Y-1140 / WM37) (Yeast).